The following is a 355-amino-acid chain: Anhydro-N-acetylmuramic acid kinase (355 aa).

9–16 serves as a coordination point for ATP; sequence GTSLDGVD.

The protein belongs to the anhydro-N-acetylmuramic acid kinase family.

It carries out the reaction 1,6-anhydro-N-acetyl-beta-muramate + ATP + H2O = N-acetyl-D-muramate 6-phosphate + ADP + H(+). It functions in the pathway amino-sugar metabolism; 1,6-anhydro-N-acetylmuramate degradation. The protein operates within cell wall biogenesis; peptidoglycan recycling. Its function is as follows. Catalyzes the specific phosphorylation of 1,6-anhydro-N-acetylmuramic acid (anhMurNAc) with the simultaneous cleavage of the 1,6-anhydro ring, generating MurNAc-6-P. Is required for the utilization of anhMurNAc either imported from the medium or derived from its own cell wall murein, and thus plays a role in cell wall recycling. This Paramagnetospirillum magneticum (strain ATCC 700264 / AMB-1) (Magnetospirillum magneticum) protein is Anhydro-N-acetylmuramic acid kinase.